A 982-amino-acid chain; its full sequence is Glutamate [NMDA] receptor subunit 1 (982 aa).

An N-terminal signal peptide occupies residues Met1–Ala16. Topologically, residues Gln17–Ser561 are extracellular. 7 N-linked (GlcNAc...) asparagine glycosylation sites follow: Asn247, Asn303, Asn334, Asn386, Asn443, Asn470, and Asn490. Glycine is bound by residues Pro518–Thr520 and Arg525. The chain crosses the membrane as a helical span at residues Asn562–Leu582. Residues Asp583–Trp639 lie on the Cytoplasmic side of the membrane. The helical transmembrane segment at Ala640–Leu660 threads the bilayer. At Glu661–Asn819 the chain is on the extracellular side. The N-linked (GlcNAc...) asparagine glycan is linked to Asn681. Residues Ser691 and Asp735 each contribute to the glycine site. A helical membrane pass occupies residues Met820–Ile840. At Glu841–Val982 the chain is on the cytoplasmic side. The disordered stretch occupies residues Glu934–Val982. The span at Gly972–Val982 shows a compositional bias: polar residues.

Belongs to the glutamate-gated ion channel (TC 1.A.10.1) family. In terms of assembly, forms a heteromeric NMDA channel with Nmdar2.

It is found in the cell membrane. It localises to the postsynaptic cell membrane. The protein resides in the postsynaptic density. In terms of biological role, NMDA receptor subtype of glutamate-gated ion channels with high calcium permeability and voltage-dependent sensitivity to magnesium. Mediated by glycine. This protein plays a key role in synaptic plasticity, synaptogenesis, excitotoxicity, memory acquisition and learning. It mediates neuronal functions in glutamate neurotransmission. Is involved in the cell surface targeting of NMDA receptors. Plays a role in associative learning and in long-term memory consolidation. This Drosophila willistoni (Fruit fly) protein is Glutamate [NMDA] receptor subunit 1.